The primary structure comprises 1037 residues: Outer dynein arm-docking complex subunit 2 (1037 aa).

Composition is skewed to basic and acidic residues over residues 316 to 334 and 376 to 391; these read EEQQKDNQIFEKPKTEDGH and SSIKDSQEEKQGKLEK. 2 disordered regions span residues 316 to 353 and 376 to 439; these read EEQQKDNQIFEKPKTEDGHSSVAGSEKSKIEKISFGKS and SSIK…ANAD. ARM repeat units follow at residues 477–516, 518–557, 528–570, 615–654, 656–695, 739–778, 821–860, 864–903, 905–944, and 946–985; these read ETCQLAIRDVGGLEVLINLLDTDEVKCKIGSLKILKEISH, PQIRRNIVDLGGLPIMVNILDSPHKSLKCLSAETIANVAK, GGLP…QHGG, HSNKEAIRKAGGIPLLARLLKTSHENMLIPVVGTLQECAS, ENYRAAIKAERIIENLVKNLNSENEQLQEHCAMAIYQCAE, KENVIKFREYKAIETLVGLLTDQPEEVLVNVVGALGECCQ, PESMAIIDRLDGVRLLWSLLKNPHPDVKASAAWALCPCIE, DAGEMVRSFVGGLELVVNLLKSDNKEVLASVCAAITNIAK, QENLAVITDHGVVPLLSKLANTNNDKLRRHLAEAISRCCM, and GRNRVAFGEHKAVAPLVRYLKSNDTNVHRATAQALYQLSE. Lysine 545 is modified (N6-methyllysine).

Component of the outer dynein arm-docking complex along with ODAD1, ODAD3, and ODAD4. Interacts with CFAP61. Highly expressed in testis. In males, also detected at lower levels in lung, brain, liver and muscle. In females, detected in ovary.

The protein resides in the cytoplasm. It localises to the cytoskeleton. The protein localises to the cilium axoneme. Its subcellular location is the cilium basal body. Functionally, component of the outer dynein arm-docking complex (ODA-DC) that mediates outer dynein arms (ODA) binding onto the doublet microtubule. Involved in mediating assembly of both ODAs and their axonemal docking complex onto ciliary microtubules. The sequence is that of Outer dynein arm-docking complex subunit 2 from Mus musculus (Mouse).